Here is a 334-residue protein sequence, read N- to C-terminus: Dual specificity mitogen-activated protein kinase kinase 6 (334 aa).

Residues 1–11 (MSQSKGKKRNP) show a composition bias toward basic residues. Residues 1 to 34 (MSQSKGKKRNPGLKIPKEAFEQPQTSSTPPRDLD) are disordered. The segment at 4–19 (SKGKKRNPGLKIPKEA) is d domain. Residues 53 to 314 (LEPIMELGRG…YPELMQHPFF (262 aa)) enclose the Protein kinase domain. Residues 59–67 (LGRGAYGVV) and K82 each bind ATP. The Proton acceptor role is filled by D179. (Microbial infection) O-acetylserine; by Yersinia YopJ; alternate is present on S207. Residue S207 is modified to Phosphoserine; by MAP3K; alternate. Residue T211 is modified to (Microbial infection) O-acetylthreonine; by Yersinia YopJ; alternate. A Phosphothreonine; by MAP3K; alternate modification is found at T211. The DVD domain stretch occupies residues 311–334 (HPFFTLHESKGTDVASFVKLILGD).

This sequence belongs to the protein kinase superfamily. STE Ser/Thr protein kinase family. MAP kinase kinase subfamily. As to quaternary structure, dimer. Interacts (via its D domain) with its substrates MAPK11, MAPK12, MAPK13 and MAPK14. Interacts (via its DVD domain) with MAP3Ks activators like MAP3K5/ASK1, MAP3K1/MEKK1, MAP3K2/MEKK2, MAP3K3/MEKK3, MAP3K4/MEKK4, MAP3K7/TAK1, MAP3K11/MLK3 and MAP3K17/TAOK2. Interacts with DCTN1. Interacts with EIF2AK2/PKR. In terms of assembly, (Microbial infection) Interacts with Yersinia YopJ. Weakly autophosphorylated. Phosphorylated at Ser-207 and Thr-211 by the majority of M3Ks, such as MAP3K5/ASK1, MAP3K1/MEKK1, MAP3K2/MEKK2, MAP3K3/MEKK3, MAP3K4/MEKK4, MAP3K7/TAK1, MAP3K11/MLK3 and MAP3K17/TAOK2. Post-translationally, in response to genotoxic stress, MAP3K-phosphorylated MAP2K6 is ubiquitinated and degraded by the SCF(FBXO31) complex. In terms of processing, (Microbial infection) Acetylation of Ser-207 and Thr-211 by Yersinia YopJ prevents phosphorylation and activation, thus blocking the MAPK signaling pathway. In terms of tissue distribution, isoform 2 is only expressed in skeletal muscle. Isoform 1 is expressed in skeletal muscle, heart, and in lesser extent in liver or pancreas.

Its subcellular location is the nucleus. It is found in the cytoplasm. The protein resides in the cytoskeleton. It catalyses the reaction L-seryl-[protein] + ATP = O-phospho-L-seryl-[protein] + ADP + H(+). The catalysed reaction is L-threonyl-[protein] + ATP = O-phospho-L-threonyl-[protein] + ADP + H(+). It carries out the reaction L-tyrosyl-[protein] + ATP = O-phospho-L-tyrosyl-[protein] + ADP + H(+). Its activity is regulated as follows. Activated by dual phosphorylation on Ser-207 and Thr-211 in response to a variety of cellular stresses, including UV radiation, osmotic shock, hypoxia, inflammatory cytokines, interferon gamma (IFNG), and less often by growth factors. MAP2K6/MKK6 is activated by the majority of M3Ks, such as MAP3K5/ASK1, MAP3K1/MEKK1, MAP3K2/MEKK2, MAP3K3/MEKK3, MAP3K4/MEKK4, MAP3K7/TAK1, MAP3K11/MLK3 and MAP3K17/TAOK2. Its function is as follows. Dual specificity protein kinase which acts as an essential component of the MAP kinase signal transduction pathway. With MAP3K3/MKK3, catalyzes the concomitant phosphorylation of a threonine and a tyrosine residue in the MAP kinases p38 MAPK11, MAPK12, MAPK13 and MAPK14 and plays an important role in the regulation of cellular responses to cytokines and all kinds of stresses. Especially, MAP2K3/MKK3 and MAP2K6/MKK6 are both essential for the activation of MAPK11 and MAPK13 induced by environmental stress, whereas MAP2K6/MKK6 is the major MAPK11 activator in response to TNF. MAP2K6/MKK6 also phosphorylates and activates PAK6. The p38 MAP kinase signal transduction pathway leads to direct activation of transcription factors. Nuclear targets of p38 MAP kinase include the transcription factors ATF2 and ELK1. Within the p38 MAPK signal transduction pathway, MAP3K6/MKK6 mediates phosphorylation of STAT4 through MAPK14 activation, and is therefore required for STAT4 activation and STAT4-regulated gene expression in response to IL-12 stimulation. The pathway is also crucial for IL-6-induced SOCS3 expression and down-regulation of IL-6-mediated gene induction; and for IFNG-dependent gene transcription. Has a role in osteoclast differentiation through NF-kappa-B transactivation by TNFSF11, and in endochondral ossification and since SOX9 is another likely downstream target of the p38 MAPK pathway. MAP2K6/MKK6 mediates apoptotic cell death in thymocytes. Acts also as a regulator for melanocytes dendricity, through the modulation of Rho family GTPases. The protein is Dual specificity mitogen-activated protein kinase kinase 6 (MAP2K6) of Homo sapiens (Human).